Reading from the N-terminus, the 133-residue chain is DNA-directed RNA polymerase subunit omega (133 aa).

It belongs to the RNA polymerase subunit omega family. The RNAP catalytic core consists of 2 alpha, 1 beta, 1 beta' and 1 omega subunit. When a sigma factor is associated with the core the holoenzyme is formed, which can initiate transcription.

The catalysed reaction is RNA(n) + a ribonucleoside 5'-triphosphate = RNA(n+1) + diphosphate. Its function is as follows. Promotes RNA polymerase assembly. Latches the N- and C-terminal regions of the beta' subunit thereby facilitating its interaction with the beta and alpha subunits. In Brucella canis (strain ATCC 23365 / NCTC 10854 / RM-666), this protein is DNA-directed RNA polymerase subunit omega.